Consider the following 390-residue polypeptide: Protein-glutamate methylesterase/protein-glutamine glutaminase 1 (390 aa).

Positions 4-121 constitute a Response regulatory domain; that stretch reads KVLVVDDSGF…SRNPQKVKQL (118 aa). A 4-aspartylphosphate modification is found at Asp-55. A compositionally biased stretch (low complexity) spans 132 to 186; sequence SNRRSSGIGSASAASPAPAAPAPSTLSSRAPAPSAAAPARAVPSRTVAPAAAPAA. A disordered region spans residues 132-201; the sequence is SNRRSSGIGS…PAHPTTTGTA (70 aa). The CheB-type methylesterase domain maps to 195-387; sequence PTTTGTAKRK…LDDIGRHLVE (193 aa). Catalysis depends on residues Ser-214, His-241, and Asp-334.

It belongs to the CheB family. Phosphorylated by CheA. Phosphorylation of the N-terminal regulatory domain activates the methylesterase activity.

It localises to the cytoplasm. The enzyme catalyses [protein]-L-glutamate 5-O-methyl ester + H2O = L-glutamyl-[protein] + methanol + H(+). It catalyses the reaction L-glutaminyl-[protein] + H2O = L-glutamyl-[protein] + NH4(+). In terms of biological role, involved in chemotaxis. Part of a chemotaxis signal transduction system that modulates chemotaxis in response to various stimuli. Catalyzes the demethylation of specific methylglutamate residues introduced into the chemoreceptors (methyl-accepting chemotaxis proteins or MCP) by CheR. Also mediates the irreversible deamidation of specific glutamine residues to glutamic acid. This is Protein-glutamate methylesterase/protein-glutamine glutaminase 1 from Pseudomonas syringae pv. tomato (strain ATCC BAA-871 / DC3000).